The primary structure comprises 258 residues: Acyl-[acyl-carrier-protein]--UDP-N-acetylglucosamine O-acyltransferase (258 aa).

The protein belongs to the transferase hexapeptide repeat family. LpxA subfamily. As to quaternary structure, homotrimer.

The protein localises to the cytoplasm. The enzyme catalyses a (3R)-hydroxyacyl-[ACP] + UDP-N-acetyl-alpha-D-glucosamine = a UDP-3-O-[(3R)-3-hydroxyacyl]-N-acetyl-alpha-D-glucosamine + holo-[ACP]. The protein operates within glycolipid biosynthesis; lipid IV(A) biosynthesis; lipid IV(A) from (3R)-3-hydroxytetradecanoyl-[acyl-carrier-protein] and UDP-N-acetyl-alpha-D-glucosamine: step 1/6. Functionally, involved in the biosynthesis of lipid A, a phosphorylated glycolipid that anchors the lipopolysaccharide to the outer membrane of the cell. This Pseudomonas savastanoi pv. phaseolicola (strain 1448A / Race 6) (Pseudomonas syringae pv. phaseolicola (strain 1448A / Race 6)) protein is Acyl-[acyl-carrier-protein]--UDP-N-acetylglucosamine O-acyltransferase.